The chain runs to 1007 residues: SUPPRESSOR OF ABI3-5 (1007 aa).

Disordered regions lie at residues 1-185 and 204-269; these read MDPS…RDRE and ESPH…FSAT. Composition is skewed to basic and acidic residues over residues 40–49, 94–120, 138–185, and 204–214; these read PDERLMRDDV, YYHD…RYDG, HSRD…RDRE, and ESPHKRYEKSR. Positions 227 to 236 are enriched in basic residues; sequence RSPRGRSHGR. Residues 237–264 show a composition bias toward basic and acidic residues; the sequence is SYREDSYEGDHWNESERRREYEDRHNQD. Residues 272–352 enclose the RRM 1 domain; sequence ATVVVKGLSM…RKLMFHYSQP (81 aa). The segment at 378 to 407 adopts a RanBP2-type zinc-finger fold; that stretch reads VPTDWICTICGCINFARRTSCFQCNEPKTK. In terms of domain architecture, RRM 2 spans 432–512; it reads HVLVVRGLDE…KILRVAYAKS (81 aa). 6 disordered regions span residues 556 to 581, 631 to 656, 725 to 755, 771 to 797, 810 to 910, and 945 to 977; these read GEKQ…SAPQ, PDQN…SQQK, HETQ…STGQ, STSN…TLMG, ASSS…GITT, and SGLG…KKVD. Residues 631 to 645 show a composition bias toward polar residues; sequence PDQNNESKVTENQPD. Low complexity-rich tracts occupy residues 778 to 793 and 823 to 835; these read SALT…TTGG and PSAS…VSGS. Over residues 849–867 the composition is skewed to basic and acidic residues; sequence THREQPQTSYRDRAAERRN. One can recognise a G-patch domain in the interval 928-974; the sequence is ESNVGNRMLRNMGWHEGSGLGKDGSGMKEPVQAQGVDRRAGLGSQQK.

As to quaternary structure, interacts with the pre-spliceosomal component U2AF65A. As to expression, ubiquitous with highest expression in siliques toward the end of seed maturation.

The protein resides in the nucleus. Functionally, splicing factor that controls alternative splicing of the developmental regulator ABI3. Reduces splicing of a cryptic intron in ABI3, leading to a decreased in ABI3-beta transcript. Regulates the splicing of the receptor-like kinase SNC4/LRKL-2.6. The chain is SUPPRESSOR OF ABI3-5 from Arabidopsis thaliana (Mouse-ear cress).